Here is a 96-residue protein sequence, read N- to C-terminus: Co-chaperonin GroES (96 aa).

The protein belongs to the GroES chaperonin family. Heptamer of 7 subunits arranged in a ring. Interacts with the chaperonin GroEL.

The protein localises to the cytoplasm. Functionally, together with the chaperonin GroEL, plays an essential role in assisting protein folding. The GroEL-GroES system forms a nano-cage that allows encapsulation of the non-native substrate proteins and provides a physical environment optimized to promote and accelerate protein folding. GroES binds to the apical surface of the GroEL ring, thereby capping the opening of the GroEL channel. The polypeptide is Co-chaperonin GroES (Leptothrix cholodnii (strain ATCC 51168 / LMG 8142 / SP-6) (Leptothrix discophora (strain SP-6))).